The chain runs to 497 residues: Guanosine-5'-triphosphate,3'-diphosphate pyrophosphatase (497 aa).

It belongs to the GppA/Ppx family. GppA subfamily.

The enzyme catalyses guanosine 3'-diphosphate 5'-triphosphate + H2O = guanosine 3',5'-bis(diphosphate) + phosphate + H(+). It functions in the pathway purine metabolism; ppGpp biosynthesis; ppGpp from GTP: step 2/2. Catalyzes the conversion of pppGpp to ppGpp. Guanosine pentaphosphate (pppGpp) is a cytoplasmic signaling molecule which together with ppGpp controls the 'stringent response', an adaptive process that allows bacteria to respond to amino acid starvation, resulting in the coordinated regulation of numerous cellular activities. The protein is Guanosine-5'-triphosphate,3'-diphosphate pyrophosphatase of Vibrio cholerae serotype O1 (strain ATCC 39541 / Classical Ogawa 395 / O395).